The sequence spans 207 residues: Guanylate kinase (207 aa).

The Guanylate kinase-like domain maps to 5–184 (GNLFIVSAPS…ALADLSAIIR (180 aa)). ATP is bound at residue 12–19 (APSGAGKS). The interval 30-49 (PSDKQVSVSHTTRKPRPGEV) is disordered.

The protein belongs to the guanylate kinase family.

The protein resides in the cytoplasm. It carries out the reaction GMP + ATP = GDP + ADP. In terms of biological role, essential for recycling GMP and indirectly, cGMP. This is Guanylate kinase from Shewanella frigidimarina (strain NCIMB 400).